Here is a 151-residue protein sequence, read N- to C-terminus: MSKIEQIAKDLVMPVLEKNNFELVDVEYKKEGSHWYLRVYIDKEGGITLDDCQLVSEYLSDRLDEVDPIEHSYILEVSSPGLDRPLKKPRDFERNIGKEIEISLYAPIDKRKKFEGELIEFTGDKIIILYNGERKEFDMKNVSLVKPVIKF.

It belongs to the RimP family.

The protein resides in the cytoplasm. Functionally, required for maturation of 30S ribosomal subunits. The polypeptide is Ribosome maturation factor RimP (Thermoanaerobacter pseudethanolicus (strain ATCC 33223 / 39E) (Clostridium thermohydrosulfuricum)).